The sequence spans 270 residues: MSLSFLLLLFLSHLILSAWAQGEKRLAPKGQPGPAATERNPGGASSRRSSSSTATSSSSPASSSSAASRGGPGSSLEQSSFQWSPSGRRTGSLYCRVGIGFHLQIYPDGKVNGSHEANMLSILEIFAVSQGIVGIRGVFSNKFLAMSKKGKLHASAKFTDDCKFRERFQENSYNTYASAIHRTEKTGREWYVALNKRGKAKRGCSPRVKPQHVSTHFLPRFKQLEQPELSFTVTVPEKKKPPNPVKPKVPLSAPRRSPNTVKYRLKFRFG.

The first 20 residues, 1–20 (MSLSFLLLLFLSHLILSAWA), serve as a signal peptide directing secretion. Residues 25–86 (RLAPKGQPGP…EQSSFQWSPS (62 aa)) are disordered. A compositionally biased stretch (low complexity) spans 41–69 (PGGASSRRSSSSTATSSSSPASSSSAASR). The span at 76–86 (LEQSSFQWSPS) shows a compositional bias: polar residues. The N-linked (GlcNAc...) asparagine glycan is linked to Asn-112. The segment at 237 to 257 (EKKKPPNPVKPKVPLSAPRRS) is disordered.

Belongs to the heparin-binding growth factors family. Interacts with FGFR1 and FGFR2. Affinity between fibroblast growth factors (FGFs) and their receptors is increased by heparan sulfate glycosaminoglycans that function as coreceptors.

It localises to the secreted. Functionally, plays an important role in the regulation of cell proliferation and cell differentiation. Required for normal regulation of the hair growth cycle. Functions as an inhibitor of hair elongation by promoting progression from anagen, the growth phase of the hair follicle, into catagen the apoptosis-induced regression phase. The polypeptide is Fibroblast growth factor 5 (FGF5) (Bos taurus (Bovine)).